The chain runs to 1603 residues: Gag-Pol polyprotein (1603 aa).

Residues 128–141 (VGETTVQRDAKMAP) are compositionally biased toward basic and acidic residues. The segment at 128 to 150 (VGETTVQRDAKMAPEETATPKTV) is disordered. A PPXY motif motif is present at residues 172 to 175 (PPPY). The LYPX(n)L motif motif lies at 180–184 (LYPSL). The tract at residues 181–217 (YPSLAGVGEQQGQGGDTPPGAEQSRAEPGHAGQAPGP) is disordered. 3 involved in capsid protein dimerization regions span residues 217–259 (PALT…KLIT), 290–298 (HDVTNLMRV), and 351–362 (GMVGNPQGQAAL). A Nuclear export signal motif is present at residues 219–229 (LTDWARVREEL). 2 CCHC-type zinc fingers span residues 507-524 (GLCY…QCPK) and 533-550 (ERCQ…QCRK). Residues 524 to 527 (KKRK) carry the Nuclear/nucleolar localization signal motif. The disordered stretch occupies residues 543–575 (HNAKQCRKRDGNQGQRPGKGLSSGPWPGPEPPA). A Peptidase A2 domain is found at 609–690 (ITALLDSGAD…VRGSILGRDC (82 aa)). The active-site For protease activity; shared with dimeric partner is the D614. One can recognise a Reverse transcriptase domain in the interval 750–938 (LQLGHIEPSL…PGVQYLGYKL (189 aa)). Mg(2+) contacts are provided by D815, D890, D891, D1158, E1192, D1213, and D1272. An RNase H type-1 domain is found at 1149-1280 (PVPGPTVFTD…ADSQATFQAY (132 aa)). The segment at 1280–1321 (YPLREAKDLHTALHIGPRALSKACNISMQQAREVVQTCPHCN) adopts an Integrase-type zinc-finger fold. H1289, H1293, C1317, and C1320 together coordinate Zn(2+). The Integrase catalytic domain maps to 1333-1496 (RGLGPLQIWQ…TPIQKHWRPT (164 aa)). The Mg(2+) site is built by D1344, D1401, and E1437. Residues 1502 to 1550 (PPVKIRIETGEWEKGWNVLVWGRGYAAVKNRDTDKVIWVPSRKVKPDIT) constitute a DNA-binding region (integrase-type). The interval 1548 to 1567 (DITQKDEVTKKDEASPLFAG) is involved in homooctamerization. Residues 1569 to 1603 (SDWIPWEDEQEGLQGETASNKQERPGEDTLAANES) are disordered.

Active as a homodimer. In terms of assembly, homodimer. Homomultimer. Homohexamer. As to quaternary structure, homodimer; further associates as a homooctamer. Heterodimer of alpha and beta subunits. Three forms of RT exist: alpha-alpha (alpha-Pol), beta-beta (beta-Pol), and alpha-beta, with the major form being the heterodimer. Both the polymerase and RNase H active sites are located in the alpha subunit of heterodimeric RT alpha-beta. Mg(2+) is required as a cofactor. It depends on Mn(2+) as a cofactor. Post-translationally, specific enzymatic cleavages in vivo yield mature proteins. In terms of processing, capsid protein p27: The cleavage at the C-terminus is slowly trimmed by the viral protease, sometimes being cut internally thereby generating the short version of the capsid protein and a capsid protein C-terminally extended by 3 amino acids in a ratio of 2:1.

The protein localises to the virion. It carries out the reaction DNA(n) + a 2'-deoxyribonucleoside 5'-triphosphate = DNA(n+1) + diphosphate. It catalyses the reaction Endonucleolytic cleavage to 5'-phosphomonoester.. Functionally, capsid protein p27: Self-associates to form the irregular polyhedron core composed of hexamers and pentamers, that encapsulates the genomic RNA-nucleocapsid complex. Assembles as a tube in vitro. Binds to inositol hexakisphosphate (IP6), which allows the assembly of the polyhedral capsid. Its function is as follows. Plays a role in the oligomerization of the Gag polyprotein and in the stabilization of the immature particle. Essential layering element during tube assembly. Allows the cooperative binging of Gag to the host plasma membrane. In terms of biological role, binds strongly to viral nucleic acids and promotes their packaging. Plays a role in the maturation-stabilization of the viral dimeric RNA via highly structured zinc-binding motifs. The aspartyl protease mediates proteolytic cleavages of Gag and Gag-Pol polyproteins during or shortly after the release of the virion from the plasma membrane. Cleavages take place as an ordered, step-wise cascade to yield mature proteins. This process is called maturation. Displays maximal activity during the budding process just prior to particle release from the cell. Functionally, catalyzes viral DNA integration into the host chromosome, by performing a series of DNA cutting and joining reactions. This recombination event is an essential step in the viral replication cycle. Has a strong preference for using the 3'-OH at the viral DNA end as a nucleophile. The sequence is that of Gag-Pol polyprotein (gag-pol) from Gallus gallus (Chicken).